A 354-amino-acid chain; its full sequence is Photosystem II D2 protein (354 aa).

Residue threonine 2 is modified to N-acetylthreonine. Position 2 is a phosphothreonine (threonine 2). The helical transmembrane segment at 42 to 62 (CAYFALGGFFTGNTFVTSWYT) threads the bilayer. Histidine 119 is a binding site for chlorophyll a. Residues 126–142 (GFMLRQFEIARAVKIRP) form a helical membrane-spanning segment. 2 residues coordinate pheophytin a: glutamine 131 and asparagine 144. The helical transmembrane segment at 154-167 (VFVSVFLIYPLGQQ) threads the bilayer. A chlorophyll a-binding site is contributed by histidine 199. The chain crosses the membrane as a helical span at residues 209–229 (AALLCAIHGATVENTLFEDGD). Histidine 216 and phenylalanine 263 together coordinate a plastoquinone. Fe cation is bound at residue histidine 216. Fe cation is bound at residue histidine 270. A helical membrane pass occupies residues 280–296 (GLWMSAIGVVGLALNLR).

This sequence belongs to the reaction center PufL/M/PsbA/D family. PSII is composed of 1 copy each of membrane proteins PsbA, PsbB, PsbC, PsbD, PsbE, PsbF, PsbH, PsbI, PsbJ, PsbK, PsbL, PsbM, PsbT, PsbX, PsbY, PsbZ, Psb30/Ycf12, at least 3 peripheral proteins of the oxygen-evolving complex and a large number of cofactors. It forms dimeric complexes. The cofactor is The D1/D2 heterodimer binds P680, chlorophylls that are the primary electron donor of PSII, and subsequent electron acceptors. It shares a non-heme iron and each subunit binds pheophytin, quinone, additional chlorophylls, carotenoids and lipids. There is also a Cl(-1) ion associated with D1 and D2, which is required for oxygen evolution. The PSII complex binds additional chlorophylls, carotenoids and specific lipids..

It localises to the plastid. Its subcellular location is the chloroplast thylakoid membrane. The enzyme catalyses 2 a plastoquinone + 4 hnu + 2 H2O = 2 a plastoquinol + O2. Its function is as follows. Photosystem II (PSII) is a light-driven water:plastoquinone oxidoreductase that uses light energy to abstract electrons from H(2)O, generating O(2) and a proton gradient subsequently used for ATP formation. It consists of a core antenna complex that captures photons, and an electron transfer chain that converts photonic excitation into a charge separation. The D1/D2 (PsbA/PsbD) reaction center heterodimer binds P680, the primary electron donor of PSII as well as several subsequent electron acceptors. D2 is needed for assembly of a stable PSII complex. This is Photosystem II D2 protein from Mesostigma viride (Green alga).